A 66-amino-acid polypeptide reads, in one-letter code: Large ribosomal subunit protein uL29 (66 aa).

It belongs to the universal ribosomal protein uL29 family.

In Roseiflexus castenholzii (strain DSM 13941 / HLO8), this protein is Large ribosomal subunit protein uL29.